Here is a 295-residue protein sequence, read N- to C-terminus: ATP synthase gamma chain (295 aa).

The protein belongs to the ATPase gamma chain family. In terms of assembly, F-type ATPases have 2 components, CF(1) - the catalytic core - and CF(0) - the membrane proton channel. CF(1) has five subunits: alpha(3), beta(3), gamma(1), delta(1), epsilon(1). CF(0) has three main subunits: a, b and c.

The protein localises to the cell membrane. Produces ATP from ADP in the presence of a proton gradient across the membrane. The gamma chain is believed to be important in regulating ATPase activity and the flow of protons through the CF(0) complex. The sequence is that of ATP synthase gamma chain from Desulforudis audaxviator (strain MP104C).